The sequence spans 459 residues: Glycosyl hydrolase family 109 protein (459 aa).

Residues 1-45 (MAGDESRSNPFSRRTLLRTSAAAGAGLGVAGLSTGYGAAQPVRPA) constitute a signal peptide (tat-type signal). NAD(+)-binding positions include 70-71 (NR), Asp92, 141-144 (WEWH), 161-162 (EC), and Asn190. Substrate contacts are provided by residues Tyr219, Arg238, 250 to 253 (YPTH), and Tyr332. Tyr250 is an NAD(+) binding site. Positions 440 to 459 (DFTRGRWQTPHPGVDSPKPA) are disordered.

Belongs to the Gfo/Idh/MocA family. Glycosyl hydrolase 109 subfamily. The cofactor is NAD(+). Predicted to be exported by the Tat system. The position of the signal peptide cleavage has not been experimentally proven.

Functionally, glycosidase. The protein is Glycosyl hydrolase family 109 protein of Saccharopolyspora erythraea (strain ATCC 11635 / DSM 40517 / JCM 4748 / NBRC 13426 / NCIMB 8594 / NRRL 2338).